The chain runs to 59 residues: Cytochrome c oxidase subunit 9, mitochondrial (59 aa).

Residues 2–8 (TIAPITG) are Mitochondrial matrix-facing. The helical transmembrane segment at 9 to 44 (TIKRRVIMDIVLGFSLGGVMASYWWWGFHMDKINKR) threads the bilayer. The Mitochondrial intermembrane segment spans residues 45–56 (EKFYAELAERKK). A propeptide spans 57 to 59 (QEN) (removed in mature form).

It belongs to the fungal cytochrome c oxidase subunit 7a family. In terms of assembly, component of the cytochrome c oxidase (complex IV, CIV), a multisubunit enzyme composed of 12 subunits. The complex is composed of a catalytic core of 3 subunits COX1, COX2 and COX3, encoded in the mitochondrial DNA, and 9 supernumerary subunits COX4, COX5A (or COX5B), COX6, COX7, COX8, COX9, COX12, COX13 and COX26, which are encoded in the nuclear genome. The complex exists as a monomer or a dimer and forms supercomplexes (SCs) in the inner mitochondrial membrane with a dimer of ubiquinol-cytochrome c oxidoreductase (cytochrome b-c1 complex, complex III, CIII), resulting in 2 different assemblies (supercomplexes III(2)IV and III(2)IV(2)).

The protein localises to the mitochondrion inner membrane. The protein operates within energy metabolism; oxidative phosphorylation. Component of the cytochrome c oxidase, the last enzyme in the mitochondrial electron transport chain which drives oxidative phosphorylation. The respiratory chain contains 3 multisubunit complexes succinate dehydrogenase (complex II, CII), ubiquinol-cytochrome c oxidoreductase (cytochrome b-c1 complex, complex III, CIII) and cytochrome c oxidase (complex IV, CIV), that cooperate to transfer electrons derived from NADH and succinate to molecular oxygen, creating an electrochemical gradient over the inner membrane that drives transmembrane transport and the ATP synthase. Cytochrome c oxidase is the component of the respiratory chain that catalyzes the reduction of oxygen to water. Electrons originating from reduced cytochrome c in the intermembrane space (IMS) are transferred via the dinuclear copper A center (CU(A)) of COX2 and heme A of COX1 to the active site in COX1, a binuclear center (BNC) formed by heme A3 and copper B (CU(B)). The BNC reduces molecular oxygen to 2 water molecules using 4 electrons from cytochrome c in the IMS and 4 protons from the mitochondrial matrix. The sequence is that of Cytochrome c oxidase subunit 9, mitochondrial (COX9) from Saccharomyces cerevisiae (strain ATCC 204508 / S288c) (Baker's yeast).